The primary structure comprises 272 residues: MAGKNMSSRLLNMKFMQRASASTPTTPTTPDGTRPSKRLRTEAAPSPETRAFQEAAAAEEAKKNAFIERAAAEAGETKWVLSVSDDKPKTAGQGLRIVEAGYGAIDSGAPIPESDDDQDEEQSAGMAGRRSFGKFNKAVERQHNPDLSSPESEQDSDASSDSDSDDDEDLDEAELLIKAERKEAAAKLRAERKAQRKADEVKSKQMAERRRSRDINLNKVGGISNAAIRNKQANVANMACHVCGQKGHLQKDCPDRKQRRGDKRKSGGAMDY.

The segment covering 1 to 10 (MAGKNMSSRL) has biased composition (polar residues). Disordered regions lie at residues 1–49 (MAGK…SPET), 102–215 (YGAI…SRDI), and 246–272 (KGHLQKDCPDRKQRRGDKRKSGGAMDY). 2 stretches are compositionally biased toward acidic residues: residues 113–122 (ESDDDQDEEQ) and 152–174 (SEQDSDASSDSDSDDDEDLDEAE). Residues 175 to 215 (LLIKAERKEAAAKLRAERKAQRKADEVKSKQMAERRRSRDI) show a composition bias toward basic and acidic residues. The CCHC-type zinc-finger motif lies at 240 to 255 (CHVCGQKGHLQKDCPD).

The protein resides in the nucleus. In terms of biological role, transcription factor; part of the gene cluster that mediates the biosynthesis of liamocins, glycolipids (also called heavy oils) composed of a single mannitol or arabitol headgroup linked to either three, four or even six 3,5-dihydroxydecanoic ester tail-groups. Positively regulates the expression of PKS1 and EST1 that mediate the biosynthesis of liamocins. This is Transcription factor GAL1 from Aureobasidium melanogenum (Aureobasidium pullulans var. melanogenum).